We begin with the raw amino-acid sequence, 23 residues long: Cytochrome c oxidase subunit 7A-liver, mitochondrial (23 aa).

This sequence belongs to the cytochrome c oxidase VIIa family. Component of the cytochrome c oxidase (complex IV, CIV), a multisubunit enzyme composed of 14 subunits. The complex is composed of a catalytic core of 3 subunits MT-CO1, MT-CO2 and MT-CO3, encoded in the mitochondrial DNA, and 11 supernumerary subunits COX4I, COX5A, COX5B, COX6A, COX6B, COX6C, COX7A, COX7B, COX7C, COX8 and NDUFA4, which are encoded in the nuclear genome. The complex exists as a monomer or a dimer and forms supercomplexes (SCs) in the inner mitochondrial membrane with NADH-ubiquinone oxidoreductase (complex I, CI) and ubiquinol-cytochrome c oxidoreductase (cytochrome b-c1 complex, complex III, CIII), resulting in different assemblies (supercomplex SCI(1)III(2)IV(1) and megacomplex MCI(2)III(2)IV(2)).

Its subcellular location is the mitochondrion inner membrane. Its pathway is energy metabolism; oxidative phosphorylation. Component of the cytochrome c oxidase, the last enzyme in the mitochondrial electron transport chain which drives oxidative phosphorylation. The respiratory chain contains 3 multisubunit complexes succinate dehydrogenase (complex II, CII), ubiquinol-cytochrome c oxidoreductase (cytochrome b-c1 complex, complex III, CIII) and cytochrome c oxidase (complex IV, CIV), that cooperate to transfer electrons derived from NADH and succinate to molecular oxygen, creating an electrochemical gradient over the inner membrane that drives transmembrane transport and the ATP synthase. Cytochrome c oxidase is the component of the respiratory chain that catalyzes the reduction of oxygen to water. Electrons originating from reduced cytochrome c in the intermembrane space (IMS) are transferred via the dinuclear copper A center (CU(A)) of subunit 2 and heme A of subunit 1 to the active site in subunit 1, a binuclear center (BNC) formed by heme A3 and copper B (CU(B)). The BNC reduces molecular oxygen to 2 water molecules using 4 electrons from cytochrome c in the IMS and 4 protons from the mitochondrial matrix. The polypeptide is Cytochrome c oxidase subunit 7A-liver, mitochondrial (Oncorhynchus mykiss (Rainbow trout)).